Reading from the N-terminus, the 91-residue chain is Large ribosomal subunit protein uL23 (91 aa).

This sequence belongs to the universal ribosomal protein uL23 family. In terms of assembly, part of the 50S ribosomal subunit. Contacts protein L29.

In terms of biological role, binds to 23S rRNA. One of the proteins that surrounds the polypeptide exit tunnel on the outside of the ribosome. The sequence is that of Large ribosomal subunit protein uL23 from Staphylothermus marinus (strain ATCC 43588 / DSM 3639 / JCM 9404 / F1).